A 456-amino-acid chain; its full sequence is MRKSPGLSDCLWAWILLLSTLTGRSYGQPSLQDELKDNTTVFTRILDRLLDGYDNRLRPGLGERVTEVKTDIFVTSFGPVSDHDMEYTIDVFFRQSWKDERLKFKGPMTVLRLNNLMASKIWTPDTFFHNGKKSVAHNMTMPNKLLRITEDGTLLYTMRLTVRAECPMHLEDFPMDAHACPLKFGSYAYTRAEVVYEWTREPARSVVVAEDGSRLNQYDLLGQTVDSGIVQSSTGEYVVMTTHFHLKRKIGYFVIQTYLPCIMTVILSQVSFWLNRESVPARTVFGVTTVLTMTTLSISARNSLPKVAYATAMDWFIAVCYAFVFSALIEFATVNYFTKRGYAWDGKSVVPEKPKKVKDPLIKKNNTYAPTATSYTPNLARGDPGLATIAKSATIEPKEVKPETKPPEPKKTFNSVSKIDRLSRIAFPLLFGIFNLVYWATYLNREPQLKAPTPHQ.

The N-terminal stretch at 1–27 (MRKSPGLSDCLWAWILLLSTLTGRSYG) is a signal peptide. At 28–253 (QPSLQDELKD…FHLKRKIGYF (226 aa)) the chain is on the extracellular side. N-linked (GlcNAc...) asparagine glycosylation is present at asparagine 38. Position 94 (arginine 94) interacts with 4-aminobutanoate. Asparagine 138 is a glycosylation site (N-linked (GlcNAc...) asparagine). Threonine 157 is a binding site for 4-aminobutanoate. Residues cysteine 166 and cysteine 180 are joined by a disulfide bond. The helical transmembrane segment at 254 to 274 (VIQTYLPCIMTVILSQVSFWL) threads the bilayer. Tryptophan 273 contributes to the 3alpha-hydroxy-5alpha-pregnan-11,20-dione binding site. The Cytoplasmic portion of the chain corresponds to 275-279 (NRESV). The helical transmembrane segment at 280 to 301 (PARTVFGVTTVLTMTTLSISAR) threads the bilayer. Residues 302–311 (NSLPKVAYAT) lie on the Extracellular side of the membrane. The chain crosses the membrane as a helical span at residues 312-333 (AMDWFIAVCYAFVFSALIEFAT). The Cytoplasmic portion of the chain corresponds to 334–421 (VNYFTKRGYA…TFNSVSKIDR (88 aa)). The helical transmembrane segment at 422–441 (LSRIAFPLLFGIFNLVYWAT) threads the bilayer. Residues 442–456 (YLNREPQLKAPTPHQ) lie on the Extracellular side of the membrane.

The protein belongs to the ligand-gated ion channel (TC 1.A.9) family. Gamma-aminobutyric acid receptor (TC 1.A.9.5) subfamily. GABRA1 sub-subfamily. In terms of assembly, heteropentamer, formed by a combination of alpha (GABRA1-6), beta (GABRB1-3), gamma (GABRG1-3), delta (GABRD), epsilon (GABRE), rho (GABRR1-3), pi (GABRP) and theta (GABRQ) subunits, each subunit exhibiting distinct physiological and pharmacological properties. Interacts with UBQLN1. Interacts with TRAK1. Interacts with KIF21B. Identified in a complex of 720 kDa composed of LHFPL4, NLGN2, GABRA1, GABRB2, GABRG2 and GABRB3. Interacts with LHFPL4. Interacts with NLGN2. Interacts with SHISA7; interaction leads regulation of GABAAR trafficking, channel deactivation kinetics and pharmacology.

It is found in the postsynaptic cell membrane. The protein localises to the cell membrane. It localises to the cytoplasmic vesicle membrane. The catalysed reaction is chloride(in) = chloride(out). Allosterically activated by benzodiazepines and the anesthetic alphaxalone. Allosterically activated by pentobarbital. Inhibited by the antagonist bicuculline. Potentiated by histamine. Its function is as follows. Alpha subunit of the heteropentameric ligand-gated chloride channel gated by Gamma-aminobutyric acid (GABA), a major inhibitory neurotransmitter in the brain. GABA-gated chloride channels, also named GABA(A) receptors (GABAAR), consist of five subunits arranged around a central pore and contain GABA active binding site(s) located at the alpha and beta subunit interface(s). When activated by GABA, GABAARs selectively allow the flow of chloride anions across the cell membrane down their electrochemical gradient. Alpha-1/GABRA1-containing GABAARs are largely synaptic. Chloride influx into the postsynaptic neuron following GABAAR opening decreases the neuron ability to generate a new action potential, thereby reducing nerve transmission. GABAARs containing alpha-1 and beta-2 or -3 subunits exhibit synaptogenic activity; the gamma-2 subunit being necessary but not sufficient to induce rapid synaptic contacts formation. GABAARs function also as histamine receptor where histamine binds at the interface of two neighboring beta subunits and potentiates GABA response. GABAARs containing alpha, beta and epsilon subunits also permit spontaneous chloride channel activity while preserving the structural information required for GABA-gated openings. Alpha-1-mediated plasticity in the orbitofrontal cortex regulates context-dependent action selection. Together with rho subunits, may also control neuronal and glial GABAergic transmission in the cerebellum. This is Gamma-aminobutyric acid receptor subunit alpha-1 from Homo sapiens (Human).